The chain runs to 345 residues: NADPH dehydrogenase (345 aa).

Residue 23–26 (SPMC) participates in FMN binding. Substrate is bound at residue Tyr28. The FMN site is built by Ala60 and Gln102. 164–167 (HGAH) contacts substrate. Residues Arg215 and 307–308 (GR) contribute to the FMN site.

Belongs to the NADH:flavin oxidoreductase/NADH oxidase family. NamA subfamily. In terms of assembly, homotetramer. Requires FMN as cofactor.

The catalysed reaction is A + NADPH + H(+) = AH2 + NADP(+). Its function is as follows. Catalyzes the reduction of the double bond of an array of alpha,beta-unsaturated aldehydes and ketones. It also reduces the nitro group of nitroester and nitroaromatic compounds. It could have a role in detoxification processes. The chain is NADPH dehydrogenase from Bacillus cereus (strain AH187).